A 221-amino-acid polypeptide reads, in one-letter code: Octanoyltransferase (221 aa).

In terms of domain architecture, BPL/LPL catalytic spans 35–221 (ESYENRIIFC…RELLAALLSK (187 aa)). Substrate is bound by residues 80-87 (RGGDITYH), 152-154 (AIG), and 165-167 (GLA). The Acyl-thioester intermediate role is filled by Cys-183.

The protein belongs to the LipB family.

Its subcellular location is the cytoplasm. It carries out the reaction octanoyl-[ACP] + L-lysyl-[protein] = N(6)-octanoyl-L-lysyl-[protein] + holo-[ACP] + H(+). It participates in protein modification; protein lipoylation via endogenous pathway; protein N(6)-(lipoyl)lysine from octanoyl-[acyl-carrier-protein]: step 1/2. Its function is as follows. Catalyzes the transfer of endogenously produced octanoic acid from octanoyl-acyl-carrier-protein onto the lipoyl domains of lipoate-dependent enzymes. Lipoyl-ACP can also act as a substrate although octanoyl-ACP is likely to be the physiological substrate. This is Octanoyltransferase from Bacteroides fragilis (strain ATCC 25285 / DSM 2151 / CCUG 4856 / JCM 11019 / LMG 10263 / NCTC 9343 / Onslow / VPI 2553 / EN-2).